The sequence spans 930 residues: F-box only protein 11 (930 aa).

The tract at residues 1-150 (MNSVRAANRR…RVSGKSQDLS (150 aa)) is disordered. Residues 7 to 16 (ANRRPRRVSR) show a composition bias toward basic residues. The segment covering 17–27 (PRPVQQQQQQP) has biased composition (low complexity). A compositionally biased stretch (pro residues) spans 28 to 73 (PQQPPPQPPQQQPPPQPPQQPPQQQPPPPPQQQPPPPPPPPPPPPQ). Positions 117–132 (PTKSSMEGASTSTTEN) are enriched in polar residues. Residues 156-202 (QYLQEKLPDEVVLKIFSYLLEQDLCRAACVCKRFSELANDPILWKRL) enclose the F-box domain. PbH1 repeat units lie at residues 398 to 420 (GACP…YITD), 421 to 443 (HAQG…WVKN), 444 to 466 (HGNP…FTFD), 467 to 489 (HGMG…EVKA), 490 to 512 (YANP…YVHE), 513 to 535 (KGRG…WITS), 536 to 558 (NSDP…YIFG), 559 to 581 (DGRG…QIRT), 582 to 604 (NSCP…YVHE), 605 to 627 (KGQG…WVTT), 628 to 650 (GSTP…YFYD), 651 to 673 (NGHG…QIRT), 674 to 696 (GSNP…LVYN), 697 to 719 (SGLG…WIKT), 720 to 742 (DSNP…CIFN), 743 to 765 (GGRG…LIST), 766 to 788 (NSHP…EITN), 789 to 811 (HATA…FLAS), and 812 to 833 (GVNV…EKAV). The UBR-type zinc finger occupies 836-907 (GQCLYKISSY…LSNPCTLAGE (72 aa)).

As to quaternary structure, component of the SCF(FBXO11) complex consisting of CUL1, RBX1, SKP1 and FBXO11. Interacts with CIITA. As to expression, at 9.5 dpc and 10.5 dpc, expression is restricted to developing heart tissue. By 11.5 dpc and 12.5 dpc, detected in liver and subsequently in muscle by 13.5 dpc. At 14.5 dpc, still detected in heart, liver and muscle and also in the developing secondary palate including the nasal, medial and oral epithelia of the palatal shelves. At 15.5 dpc and 16.5 dpc, expressed in lung, kidney, heart, liver, muscle and adrenal gland. At this time, fusion of the palate shelves has occurred, with expression confined to the nasal and oral epithelia. At 17.5 dpc, expression in the lung is confined to bronchial epithelial cells and is evident in bone marrow, skin, tissue macrophages, osteoblasts, kidney, liver and spleen. At 18.5 dpc, expressed in bone marrow, liver, kidney and muscle but decreases in heart and lung. At this time, first detected in the middle ear epithelium. At the newborn stage, expression is strong in the middle ear where it is confined to mucin-secreting cells, as well as persisting in bone marrow, kidney and liver. Middle ear expression persists in postnatal head tissue at 4 and 13 days after birth and has declined by 21 days after birth. In the adult, expression is seen in alveolar macrophages of the lung, glomeruli and collecting tubules of the kidney, midbrain, heart and muscle.

Its subcellular location is the nucleus. The protein localises to the chromosome. It functions in the pathway protein modification; protein ubiquitination. Its function is as follows. Substrate recognition component of a SCF (SKP1-CUL1-F-box protein) E3 ubiquitin-protein ligase complex which mediates the ubiquitination and subsequent proteasomal degradation of target proteins, such as DTL/CDT2, BCL6, SNAI1 and PRDM1/BLIMP1. The SCF(FBXO11) complex mediates ubiquitination and degradation of BCL6, thereby playing a role in the germinal center B-cells terminal differentiation toward memory B-cells and plasma cells. The SCF(FBXO11) complex also mediates ubiquitination and degradation of DTL, an important step for the regulation of TGF-beta signaling, cell migration and the timing of the cell-cycle progression and exit. The SCF(FBXO11) complex also catalyzes ubiquitination and degradation of GSK3B-phosphorylated SNAI1. Binds to and neddylates phosphorylated p53/TP53, inhibiting its transcriptional activity. Plays a role in the regulatiom of erythropoiesis but not myelopoiesis or megakaryopoiesis. Mechanistically, activates erythroid genes by mediating the degradation of BAHD1, a heterochromatin-associated protein that recruits corepressors to H3K27me3 marks. Participates in macrophage cell death and inflammation in response to bacterial toxins by regulating the expression of complement 5a receptor 1/C5AR1 and IL-1beta. Acts as a critical regulator to determine the level of MHC-II by mediating the recognition of degron at the P/S/T domain of CIITA leading to its ubiquitination and subsequent degradation via the proteasome. Participates in the antiviral repsonse by initiating the activation of TBK1-IRF3-IFN-I axis. Mediates the 'Lys-63'-linked ubiquitination of TRAF3 to strengthen the interaction between TRAF3 and TBK1. The sequence is that of F-box only protein 11 from Mus musculus (Mouse).